The primary structure comprises 421 residues: 3-isopropylmalate dehydratase large subunit (421 aa).

3 residues coordinate [4Fe-4S] cluster: Cys-292, Cys-352, and Cys-355.

The protein belongs to the aconitase/IPM isomerase family. LeuC type 2 subfamily. As to quaternary structure, heterodimer of LeuC and LeuD. The cofactor is [4Fe-4S] cluster.

The enzyme catalyses (2R,3S)-3-isopropylmalate = (2S)-2-isopropylmalate. It functions in the pathway amino-acid biosynthesis; L-leucine biosynthesis; L-leucine from 3-methyl-2-oxobutanoate: step 2/4. In terms of biological role, catalyzes the isomerization between 2-isopropylmalate and 3-isopropylmalate, via the formation of 2-isopropylmaleate. The sequence is that of 3-isopropylmalate dehydratase large subunit from Herpetosiphon aurantiacus (strain ATCC 23779 / DSM 785 / 114-95).